Reading from the N-terminus, the 461-residue chain is MEPAPDAQEARTVREALGRYEAALEGAVRALHEDMRGLQRGVERRVAEAMRLAGPLARTVADLQRDNQRLQAQLERLTRQVEALGLASGMSPVPGTPGTPSPPPAPGVPDRAPRLGSARFASHATFSLSGRGQSLDHDEASESEMRKTSNSCIMENGHQPGAGPGDGPPEIAQNFSAPDPPRPRPVSLSLRLPHQPVTAITRVSDRFSGETSAAALSPMSAATLGGLNPSPSEVITPWTPSPSEKNSSFTWSVPSSGYGAVTASKHSNSPPLVTPPQSPVSPQPPAITQVHRQGERRRELVRSQTLPRTSEAQARKALFEKWEQETAAGKGKGEARARLKRSQSFGVASASSIKQILLEWCRSKTLGYQHVDLQNFSSSWSDGMAFCALVHSFFPDAFDYNSLSPTQRQKNFELAFTMAENLANCERLIEVEDMMVMGRKPDPMCVFTYVQSLYNHLRRFE.

A coiled-coil region spans residues 55–88 (PLARTVADLQRDNQRLQAQLERLTRQVEALGLAS). Disordered regions lie at residues 87–193 (ASGM…LRLP) and 227–248 (LNPS…KNSS). Over residues 94-107 (PGTPGTPSPPPAPG) the composition is skewed to pro residues. Residue Thr96 is modified to Phosphothreonine. A phosphoserine mark is found at Ser101, Ser129, and Ser134. The span at 134-147 (SLDHDEASESEMRK) shows a compositional bias: basic and acidic residues. Residues Ser256 and Ser269 each carry the phosphoserine modification. The tract at residues 260-307 (AVTASKHSNSPPLVTPPQSPVSPQPPAITQVHRQGERRRELVRSQTLP) is disordered. The span at 272-285 (LVTPPQSPVSPQPP) shows a compositional bias: pro residues. Position 274 is a phosphothreonine (Thr274). Ser278 bears the Phosphoserine mark. Over residues 292 to 301 (RQGERRRELV) the composition is skewed to basic and acidic residues. Ser344 is subject to Phosphoserine. The region spanning 351-458 (SSIKQILLEW…YVQSLYNHLR (108 aa)) is the Calponin-homology (CH) domain.

Belongs to the smoothelin family.

The sequence is that of Smoothelin-like protein 2 (SMTNL2) from Homo sapiens (Human).